We begin with the raw amino-acid sequence, 430 residues long: Ribosomal protein uS12 methylthiotransferase RimO (430 aa).

The MTTase N-terminal domain maps to 4–119 (LKINFISLGC…IPVLFDIKPK (116 aa)). The [4Fe-4S] cluster site is built by C13, C49, C82, C141, C145, and C148. A Radical SAM core domain is found at 127 to 358 (STPKHTAYLK…SALQENITEQ (232 aa)). Residues 361–430 (KSLIGKELDI…DKYDVVGEAE (70 aa)) enclose the TRAM domain.

Belongs to the methylthiotransferase family. RimO subfamily. The cofactor is [4Fe-4S] cluster.

Its subcellular location is the cytoplasm. It catalyses the reaction L-aspartate(89)-[ribosomal protein uS12]-hydrogen + (sulfur carrier)-SH + AH2 + 2 S-adenosyl-L-methionine = 3-methylsulfanyl-L-aspartate(89)-[ribosomal protein uS12]-hydrogen + (sulfur carrier)-H + 5'-deoxyadenosine + L-methionine + A + S-adenosyl-L-homocysteine + 2 H(+). Its function is as follows. Catalyzes the methylthiolation of an aspartic acid residue of ribosomal protein uS12. In Sulfurihydrogenibium sp. (strain YO3AOP1), this protein is Ribosomal protein uS12 methylthiotransferase RimO.